Consider the following 510-residue polypeptide: Inositol-3-phosphate synthase (510 aa).

NAD(+) contacts are provided by glycine 70, glycine 71, asparagine 72, asparagine 73, aspartate 143, isoleucine 180, glutamine 190, arginine 193, threonine 230, alanine 231, asparagine 232, threonine 233, glycine 281, serine 282, aspartate 306, serine 309, asparagine 340, asparagine 341, aspartate 342, lysine 355, glycine 393, aspartate 394, aspartate 422, and serine 423.

It belongs to the myo-inositol 1-phosphate synthase family. Requires NAD(+) as cofactor.

The protein localises to the cytoplasm. It localises to the cytosol. It is found in the nucleus. It catalyses the reaction D-glucose 6-phosphate = 1D-myo-inositol 3-phosphate. Its pathway is polyol metabolism; myo-inositol biosynthesis; myo-inositol from D-glucose 6-phosphate: step 1/2. Functionally, key enzyme in myo-inositol biosynthesis pathway that catalyzes the conversion of glucose 6-phosphate to 1-myo-inositol 1-phosphate in a NAD-dependent manner. This Nicotiana tabacum (Common tobacco) protein is Inositol-3-phosphate synthase.